A 321-amino-acid chain; its full sequence is MVDESKLQCYHKGCGLLFDPKENDNEACTYHPGGPYFHDAYKIWTCCDKKSTDFGTWMNYKGCTRGKHSNEKPVDIVKVAAVKEIRPEKEEDVIVWKGLNKSGKLDSKDATKRIEQNLNVEVTPGATAAIEKKLKEISEAAQSADIQIGAPCRNNGCSTEFDGSKNKENCQHHPGAAIFHEGMKYWSCCNKKTSNFGAFLEQVGCTSGEHKFRNNEIVSKFREDWFSSNGFVTINVYCRGALPETANIVSDGHTVRVSMKHGFGNASVDLDYDLWDEVIPEESRVVIGERKVEISLKQKHGTGWPRLKFDPELDAKNDEEA.

C9, C14, C28, H31, C46, C47, C63, H68, C152, C157, C170, H173, C188, C189, C205, and H210 together coordinate Zn(2+). CHORD domains follow at residues 9–68 (CYHK…RGKH) and 152–210 (CRNN…SGEH). Residues 218 to 308 (VSKFREDWFS…KHGTGWPRLK (91 aa)) enclose the CS domain.

Regulates centrosome duplication. Controls the secretion of the tyrosine kinase receptor let-23/EGFR from the endoplasmic reticulum and is required for the localization of let-23/EGFR to the plasma membrane of vulval precursor cells. It thus plays a role in positively regulating let/EGFR signaling, and anchor cell and vulval precursor cell alignment. Plays a role in vulval development and morphogenesis. The polypeptide is Cysteine and histidine-rich domain-containing protein 1 (Caenorhabditis elegans).